The chain runs to 143 residues: 3-hydroxyacyl-[acyl-carrier-protein] dehydratase FabZ (143 aa).

The active site involves histidine 49.

Belongs to the thioester dehydratase family. FabZ subfamily.

The protein localises to the cytoplasm. The catalysed reaction is a (3R)-hydroxyacyl-[ACP] = a (2E)-enoyl-[ACP] + H2O. Involved in unsaturated fatty acids biosynthesis. Catalyzes the dehydration of short chain beta-hydroxyacyl-ACPs and long chain saturated and unsaturated beta-hydroxyacyl-ACPs. This Ehrlichia chaffeensis (strain ATCC CRL-10679 / Arkansas) protein is 3-hydroxyacyl-[acyl-carrier-protein] dehydratase FabZ.